The primary structure comprises 485 residues: NADH-quinone oxidoreductase subunit N (485 aa).

14 consecutive transmembrane segments (helical) span residues 8-28, 35-55, 75-95, 105-125, 127-147, 159-179, 203-223, 235-255, 271-291, 297-317, 326-346, 374-394, 407-426, and 449-469; these read LIALSPLLIVGLTVVVVMLCI, FVNATMTVIGLNIALLSLYFV, FYTGLVLLASLATSTFAYPWL, FYLLVLIAALGGILLSSANHL, SLFIGIELLSLPLFGLVGYAF, YMLLSAAASSFLLFGMALIYA, LLAGLGMMIVGLGFKLSLVPF, PAPVSTFLATAGKIAVFGAVM, IVLGVIAFASILFGNVMAVSQ, LLGYSSIAHLGYLLVALIAVQ, VGVYLVGYLFSSLGAFGVVSL, AVMTVMMLSLAGIPMTLGFFG, LWWLTGAVVLGSAIGLYYYL, and ALTAGGVVVLISSIAVLFFGL.

This sequence belongs to the complex I subunit 2 family. NDH-1 is composed of 13 different subunits. Subunits NuoA, H, J, K, L, M, N constitute the membrane sector of the complex.

It localises to the cell inner membrane. The catalysed reaction is a quinone + NADH + 5 H(+)(in) = a quinol + NAD(+) + 4 H(+)(out). Functionally, NDH-1 shuttles electrons from NADH, via FMN and iron-sulfur (Fe-S) centers, to quinones in the respiratory chain. The immediate electron acceptor for the enzyme in this species is believed to be ubiquinone. Couples the redox reaction to proton translocation (for every two electrons transferred, four hydrogen ions are translocated across the cytoplasmic membrane), and thus conserves the redox energy in a proton gradient. In Pectobacterium carotovorum subsp. carotovorum (strain PC1), this protein is NADH-quinone oxidoreductase subunit N.